The chain runs to 388 residues: Dual-specificity RNA methyltransferase RlmN (388 aa).

Catalysis depends on E109, which acts as the Proton acceptor. The region spanning E115 to D354 is the Radical SAM core domain. Cysteines 122 and 359 form a disulfide. [4Fe-4S] cluster-binding residues include C129, C133, and C136. Residues G183–E184, S215, S237–H239, and N316 contribute to the S-adenosyl-L-methionine site. C359 (S-methylcysteine intermediate) is an active-site residue.

It belongs to the radical SAM superfamily. RlmN family. [4Fe-4S] cluster is required as a cofactor.

The protein resides in the cytoplasm. It carries out the reaction adenosine(2503) in 23S rRNA + 2 reduced [2Fe-2S]-[ferredoxin] + 2 S-adenosyl-L-methionine = 2-methyladenosine(2503) in 23S rRNA + 5'-deoxyadenosine + L-methionine + 2 oxidized [2Fe-2S]-[ferredoxin] + S-adenosyl-L-homocysteine. It catalyses the reaction adenosine(37) in tRNA + 2 reduced [2Fe-2S]-[ferredoxin] + 2 S-adenosyl-L-methionine = 2-methyladenosine(37) in tRNA + 5'-deoxyadenosine + L-methionine + 2 oxidized [2Fe-2S]-[ferredoxin] + S-adenosyl-L-homocysteine. Functionally, specifically methylates position 2 of adenine 2503 in 23S rRNA and position 2 of adenine 37 in tRNAs. m2A2503 modification seems to play a crucial role in the proofreading step occurring at the peptidyl transferase center and thus would serve to optimize ribosomal fidelity. The protein is Dual-specificity RNA methyltransferase RlmN of Citrobacter koseri (strain ATCC BAA-895 / CDC 4225-83 / SGSC4696).